The chain runs to 472 residues: Nuclear receptor subfamily 0 group B member 1 (472 aa).

3 tandem repeats follow at residues 1-67 (MAGE…YRCC), 68-135 (FCGE…YRCC), and 136-202 (FCGK…YRSY). The tract at residues 1–255 (MAGEDHPWHG…RPIALKDPQV (255 aa)) is 4 X 67 AA tandem repeats. Short sequence motifs (LXXLL motif) lie at residues 13-17 (LYNLL), 80-84 (LYSML), and 148-152 (LYSLL). Residues 190–471 (QSTQAMAFLY…DMMLEMLCAK (282 aa)) enclose the NR LBD domain. The 4; truncated repeat unit spans residues 203 to 255 (VCCEEQPQQSSVASDTPVRADQTPAAPQEQPRAPWWDTSSGVQRPIALKDPQV). Disordered regions lie at residues 214-237 (VASD…RAPW) and 326-345 (RRQE…EQPQ). The short motif at 463–468 (MMLEML) is the AF-2 motif element.

It belongs to the nuclear hormone receptor family. NR0 subfamily. In terms of assembly, homodimer. Interacts with NR5A1, NR5A2, NR0B2 and with COPS2. Interacts with ESRRB; represses ESRRB activity at the GATA6 promoter.

The protein resides in the nucleus. It localises to the cytoplasm. In terms of biological role, nuclear receptor that lacks a DNA-binding domain and acts as a corepressor that inhibits the transcriptional activity of other nuclear receptors through heterodimeric interactions. Component of a cascade required for the development of the hypothalamic-pituitary-adrenal-gonadal axis. May also have a role in the development of the embryo and in the maintenance of embryonic stem cell pluripotency. This is Nuclear receptor subfamily 0 group B member 1 (Nr0b1) from Rattus norvegicus (Rat).